We begin with the raw amino-acid sequence, 127 residues long: Aspartate 1-decarboxylase (127 aa).

S25 functions as the Schiff-base intermediate with substrate; via pyruvic acid in the catalytic mechanism. At S25 the chain carries Pyruvic acid (Ser). T57 contacts substrate. Y58 (proton donor) is an active-site residue. G73–A75 contributes to the substrate binding site.

It belongs to the PanD family. As to quaternary structure, heterooctamer of four alpha and four beta subunits. The cofactor is pyruvate. Is synthesized initially as an inactive proenzyme, which is activated by self-cleavage at a specific serine bond to produce a beta-subunit with a hydroxyl group at its C-terminus and an alpha-subunit with a pyruvoyl group at its N-terminus.

It is found in the cytoplasm. It catalyses the reaction L-aspartate + H(+) = beta-alanine + CO2. Its pathway is cofactor biosynthesis; (R)-pantothenate biosynthesis; beta-alanine from L-aspartate: step 1/1. Functionally, catalyzes the pyruvoyl-dependent decarboxylation of aspartate to produce beta-alanine. The polypeptide is Aspartate 1-decarboxylase (Bacillus licheniformis (strain ATCC 14580 / DSM 13 / JCM 2505 / CCUG 7422 / NBRC 12200 / NCIMB 9375 / NCTC 10341 / NRRL NRS-1264 / Gibson 46)).